Here is a 129-residue protein sequence, read N- to C-terminus: Small ribosomal subunit protein uS11 (129 aa).

The protein belongs to the universal ribosomal protein uS11 family. In terms of assembly, part of the 30S ribosomal subunit. Interacts with proteins S7 and S18. Binds to IF-3.

In terms of biological role, located on the platform of the 30S subunit, it bridges several disparate RNA helices of the 16S rRNA. Forms part of the Shine-Dalgarno cleft in the 70S ribosome. In Bartonella quintana (strain Toulouse) (Rochalimaea quintana), this protein is Small ribosomal subunit protein uS11.